A 5289-amino-acid chain; its full sequence is Mucin-2 (5289 aa).

The first 20 residues, 1–20, serve as a signal peptide directing secretion; sequence MGLPLARLAAVCLALSLAGG. At serine 21 the chain carries Phosphoserine. Histidine 34 is a binding site for Cu(2+). Positions 35–207 constitute a VWFD 1 domain; the sequence is NVCSTWGNFH…KINQPDVVCE (173 aa). Cystine bridges form between cysteine 37–cysteine 169, cysteine 59–cysteine 206, cysteine 67–cysteine 166, cysteine 218–cysteine 255, cysteine 225–cysteine 250, cysteine 237–cysteine 275, cysteine 257–cysteine 263, cysteine 265–cysteine 291, cysteine 295–cysteine 329, cysteine 308–cysteine 321, cysteine 312–cysteine 351, cysteine 331–cysteine 345, cysteine 353–cysteine 375, cysteine 370–cysteine 387, cysteine 373–cysteine 382, cysteine 391–cysteine 528, cysteine 413–cysteine 563, cysteine 435–cysteine 443, cysteine 574–cysteine 619, cysteine 588–cysteine 614, cysteine 601–cysteine 639, cysteine 621–cysteine 627, cysteine 629–cysteine 654, cysteine 661–cysteine 698, cysteine 674–cysteine 688, cysteine 678–cysteine 718, cysteine 700–cysteine 712, cysteine 720–cysteine 742, and cysteine 740–cysteine 749. Aspartate 49 contacts Ca(2+). Methionine 146 and methionine 154 together coordinate Cu(+). Glutamate 156 contributes to the Cu(2+) binding site. An N-linked (GlcNAc...) asparagine glycan is attached at asparagine 163. Aspartate 171, asparagine 173, leucine 175, and glutamate 180 together coordinate Ca(2+). A Cu(2+)-binding site is contributed by histidine 277. The TIL domain maps to 295–351; sequence CPGNLVYLESGSPCMDTCSHLEVSSLCEEHRMDGCFCPEGTVYDDIGDSGCVPVSQC. Histidine 324 lines the Cu(2+) pocket. A Cu(+)-binding site is contributed by methionine 326. The VWFD 2 domain occupies 389–564; that stretch reads GTCALEGGSH…NTWKAQSSCH (176 aa). Aspartate 403 contributes to the Ca(2+) binding site. An N-linked (GlcNAc...) asparagine glycan is attached at asparagine 423. Residues asparagine 530, asparagine 532, leucine 534, aspartate 537, and aspartate 538 each coordinate Ca(2+). The N-linked (GlcNAc...) asparagine glycan is linked to asparagine 670. An N-linked (GlcNAc...) asparagine glycan is attached at asparagine 770. Intrachain disulfides connect cysteine 784–cysteine 820, cysteine 802–cysteine 814, cysteine 822–cysteine 844, cysteine 839–cysteine 856, cysteine 842–cysteine 851, cysteine 860–cysteine 992, cysteine 882–cysteine 1027, cysteine 891–cysteine 989, cysteine 909–cysteine 916, cysteine 1037–cysteine 1080, cysteine 1051–cysteine 1075, cysteine 1062–cysteine 1102, cysteine 1082–cysteine 1090, cysteine 1092–cysteine 1117, cysteine 1108–cysteine 1137, cysteine 1121–cysteine 1163, cysteine 1145–cysteine 1187, cysteine 1167–cysteine 1181, cysteine 1189–cysteine 1213, cysteine 1208–cysteine 1238, and cysteine 1211–cysteine 1221. Residues 858-1028 form the VWFD 3 domain; the sequence is GTCSIYGSGH…NSWKEAPTCP (171 aa). Position 872 (aspartate 872) interacts with Ca(2+). Asparagine 894 carries an N-linked (GlcNAc...) asparagine glycan. Residues asparagine 994, aspartate 996, arginine 998, asparagine 1001, and aspartate 1002 each contribute to the Ca(2+) site. Asparagine 1139 and asparagine 1154 each carry an N-linked (GlcNAc...) asparagine glycan. 3 N-linked (GlcNAc...) asparagine glycosylation sites follow: asparagine 1215, asparagine 1230, and asparagine 1246. 10 O-linked (GalNAc) threonine glycosylation sites follow: threonine 1266, threonine 1267, threonine 1269, threonine 1270, threonine 1272, threonine 1275, threonine 1276, threonine 1281, threonine 1282, and threonine 1287. O-linked (GalNAc) serine glycosylation is found at serine 1291 and serine 1292. O-linked (GalNAc) threonine glycosylation occurs at threonine 1293. Serine 1296 carries O-linked (GalNAc) serine glycosylation. Residue threonine 1297 is glycosylated (O-linked (GalNAc) threonine). Residues asparagine 1310, aspartate 1312, histidine 1313, serine 1316, aspartate 1319, glycine 1321, aspartate 1322, glutamate 1324, aspartate 1381, and tyrosine 1382 each contribute to the Ca(2+) site. 5 stretches are compositionally biased toward pro residues: residues 1399–1411, 1419–1510, 1520–1549, 1559–1628, and 1638–1679; these read PSPPTTTPSPPPT, TTTP…PITP, TTTPSPPTTTTTTPPPTTTPSPPTTTPITP, and TTTP…PPTT. The tract at residues 1399 to 1773 is disordered; that stretch reads PSPPTTTPSP…SITPPTFSPF (375 aa). Repeat copies occupy residues 1401-1416, 1417-1432, 1433-1448, 1449-1464, 1465-1471, and 1472-1478. Residues 1401–1747 form an approximate repeats region; the sequence is PPTTTPSPPP…SPPTTTMTTL (347 aa). A 7A repeat occupies 1479-1494; that stretch reads PPTTTPSPPTTTTTTP. Residues 1495–1517 form a 7B repeat; it reads PPTTTPSPPTTTPITPPASTTTL. The stretch at 1518-1533 is one 8A repeat; sequence PPTTTPSPPTTTTTTP. An 8B repeat occupies 1534–1556; the sequence is PPTTTPSPPTTTPITPPTSTTTL. A 9A repeat occupies 1557 to 1572; that stretch reads PPTTTPSPPPTTTTTP. A 9B repeat occupies 1573-1596; the sequence is PPTTTPSPPTTTTPSPPTITTTTP. One copy of the 10A repeat lies at 1597 to 1612; sequence PPTTTPSPPTTTTTTP. The 10B repeat unit spans residues 1613–1635; that stretch reads PPTTTPSPPTTTPITPPTSTTTL. One copy of the 11A repeat lies at 1636–1651; the sequence is PPTTTPSPPPTTTTTP. The stretch at 1652–1675 is one 11B repeat; sequence PPTTTPSPPTTTTPSPPITTTTTP. Repeat copies occupy residues 1676 to 1683, 1684 to 1699, 1700 to 1715, 1716 to 1731, and 1732 to 1747. Low complexity-rich tracts occupy residues 1680 to 1720 and 1741 to 1759; these read TPSS…STTT and TTTMTTLPPTTTSSPLTTT. Positions 1760-1770 are enriched in pro residues; it reads PLPPSITPPTF. Asparagine 1787 and asparagine 1820 each carry an N-linked (GlcNAc...) asparagine glycan. Low complexity-rich tracts occupy residues 1885–2158, 2165–4238, 4269–4315, and 4329–4430; these read MTTT…TMVT, GTQT…QTPT, TTVT…STAP, and STPQ…PSII. Disordered stretches follow at residues 1885–4238 and 4269–4430; these read MTTT…QTPT and TTVT…PSII. N-linked (GlcNAc...) asparagine glycosylation is found at asparagine 4449, asparagine 4461, asparagine 4472, and asparagine 4483. Positions 4492–4524 are disordered; sequence PTPTPSKSTPTPSKPSSTPSKPTPGTKPPECPD. The span at 4496-4511 shows a compositional bias: low complexity; that stretch reads PSKSTPTPSKPSSTPS. Pro residues predominate over residues 4512–4522; sequence KPTPGTKPPEC. Asparagine 4532, asparagine 4548, and asparagine 4612 each carry an N-linked (GlcNAc...) asparagine glycan. The 184-residue stretch at 4589-4772 folds into the VWFD 4 domain; that stretch reads CYCTGWGDPH…VNDPSKPHCP (184 aa). 3 disulfide bridges follow: cysteine 4591–cysteine 4732, cysteine 4613–cysteine 4771, and cysteine 4637–cysteine 4645. N-linked (GlcNAc...) asparagine glycans are attached at residues asparagine 4726 and asparagine 4737. Residues 4770–4795 are disordered; it reads HCPHSSSTTKRPAVTVPGGGKTTPHK. Asparagine 4862, asparagine 4897, asparagine 4991, asparagine 4998, asparagine 5065, asparagine 5080, asparagine 5129, asparagine 5148, and asparagine 5179 each carry an N-linked (GlcNAc...) asparagine glycan. One can recognise a VWFC 1 domain in the interval 4927–4996; sequence CVGPDNVPRE…DTCCNITVCK (70 aa). In terms of domain architecture, VWFC 2 spans 5034–5101; sequence GVCVHGNAEY…APGECCKKCE (68 aa). Intrachain disulfides connect cysteine 5185/cysteine 5232, cysteine 5199/cysteine 5246, cysteine 5208/cysteine 5262, and cysteine 5212/cysteine 5264. Residues 5185–5270 form the CTCK domain; it reads CSTVPVTTEV…SCQCQDTVCG (86 aa).

Homomultimer; disulfide-linked. The N- and C-terminus mediate their assembly into higher order structures to form filaments. The CTCK domains of two polypeptides associate in the endoplasmic reticulum to generate intermolecularly disulfide-bonded dimers. These dimers progress to the Golgi apparatus, which is a more acidic environment than the endoplasmic reticulum. Under acidic conditions, the N-termini form non-covalent intermolecular interactions that juxtapose assemblies of the third VWD domain (VWD3) from different CTCK-linked dimers. The VWD3 assemblies then become disulfide bonded to one another to produce long, disulfide-linked polymers that remain highly compact until secretion. Interacts with FCGBP. Interacts with AGR2; disulfide-linked. In terms of assembly, (Microbial infection) Interacts in vitro with L.monocytogenes internalin proteins InlB, InlC and InlJ; for InlC binding is slightly better at pH 5.5, (the pH of the intestine) than at pH 7.4. Post-translationally, O-glycosylated. O-glycosylation is required for mucin assembly. Goblet cells synthesize two forms of mucin that differ in branched chain O-glycosylation and the site of production in the colon. In terms of processing, may undergo proteolytic cleavage in the outer mucus layer of the colon, contributing to the expanded volume and loose nature of this layer which allows for bacterial colonization in contrast to the inner mucus layer which is dense and devoid of bacteria. At low pH of 6 and under, undergoes autocatalytic cleavage in vitro in the N-terminal region of the fourth VWD domain. It is likely that this also occurs in vivo and is triggered by the low pH of the late secretory pathway. As to expression, colon, small intestine, colonic tumors, bronchus, cervix and gall bladder.

The protein resides in the secreted. Its function is as follows. Coats the epithelia of the intestines and other mucus membrane-containing organs to provide a protective, lubricating barrier against particles and infectious agents at mucosal surfaces. Major constituent of the colon mucus, which is mainly formed by large polymeric networks of MUC2 secreted by goblet cells that cover the exposed surfaces of intestine. MUC2 networks form hydrogels that guard the underlying epithelium from pathogens and other hazardous matter entering from the outside world, while permitting nutrient absorption and gas exchange. Acts as a divalent copper chaperone that protects intestinal cells from copper toxicity and facilitates nutritional copper unptake into cells. Binds both Cu(2+) and its reduced form, Cu(1+), at two juxtaposed binding sites: Cu(2+), once reduced to Cu(1+) by vitamin C (ascorbate) or other dietary antioxidants, transits to the other binding site. MUC2-bound Cu(1+) is protected from oxidation in aerobic environments, and can be released for nutritional delivery to cells. Mucin gels store antimicrobial molecules that participate in innate immunity. Mucin glycoproteins also house and feed the microbiome, lubricate tissue surfaces, and may facilitate the removal of contaminants and waste products from the body. Goblet cells synthesize two forms of MUC2 mucin that differ in branched chain O-glycosylation and the site of production in the colon: a (1) 'thick' mucus that wraps the microbiota to form fecal pellets is produced in the proximal, ascending colon. 'Thick' mucus transits along the descending colon and is lubricated by a (2) 'thin' MUC2 mucus produced in the distal colon which adheres to the 'thick' mucus. This is Mucin-2 from Homo sapiens (Human).